Reading from the N-terminus, the 192-residue chain is Threonylcarbamoyl-AMP synthase (192 aa).

The 188-residue stretch at 5–192 (TTSVAEAAHC…DATTGRVIRD (188 aa)) folds into the YrdC-like domain.

It belongs to the SUA5 family. TsaC subfamily.

Its subcellular location is the cytoplasm. It carries out the reaction L-threonine + hydrogencarbonate + ATP = L-threonylcarbamoyladenylate + diphosphate + H2O. Functionally, required for the formation of a threonylcarbamoyl group on adenosine at position 37 (t(6)A37) in tRNAs that read codons beginning with adenine. Catalyzes the conversion of L-threonine, HCO(3)(-)/CO(2) and ATP to give threonylcarbamoyl-AMP (TC-AMP) as the acyladenylate intermediate, with the release of diphosphate. This Acinetobacter baylyi (strain ATCC 33305 / BD413 / ADP1) protein is Threonylcarbamoyl-AMP synthase.